The chain runs to 444 residues: Glutamate--tRNA ligase 2 (444 aa).

The 'HIGH' region motif lies at 8-18; sequence PSPTGHLHAGN. The 'KMSKS' region signature appears at 241–245; it reads KLSKR. Residue Lys-244 participates in ATP binding.

This sequence belongs to the class-I aminoacyl-tRNA synthetase family. Glutamate--tRNA ligase type 1 subfamily. Monomer.

It is found in the cytoplasm. The catalysed reaction is tRNA(Glu) + L-glutamate + ATP = L-glutamyl-tRNA(Glu) + AMP + diphosphate. Catalyzes the attachment of glutamate to tRNA(Glu) in a two-step reaction: glutamate is first activated by ATP to form Glu-AMP and then transferred to the acceptor end of tRNA(Glu). The polypeptide is Glutamate--tRNA ligase 2 (Acidiphilium cryptum (strain JF-5)).